The following is a 423-amino-acid chain: UDP-N-acetylglucosamine 1-carboxyvinyltransferase 1 (423 aa).

23-24 is a binding site for phosphoenolpyruvate; it reads KN. Arginine 96 is a binding site for UDP-N-acetyl-alpha-D-glucosamine. Residue cysteine 120 is the Proton donor of the active site. Cysteine 120 is modified (2-(S-cysteinyl)pyruvic acid O-phosphothioketal). Aspartate 309 and valine 331 together coordinate UDP-N-acetyl-alpha-D-glucosamine.

Belongs to the EPSP synthase family. MurA subfamily.

The protein resides in the cytoplasm. It catalyses the reaction phosphoenolpyruvate + UDP-N-acetyl-alpha-D-glucosamine = UDP-N-acetyl-3-O-(1-carboxyvinyl)-alpha-D-glucosamine + phosphate. It functions in the pathway cell wall biogenesis; peptidoglycan biosynthesis. Functionally, cell wall formation. Adds enolpyruvyl to UDP-N-acetylglucosamine. This Streptococcus pyogenes serotype M1 protein is UDP-N-acetylglucosamine 1-carboxyvinyltransferase 1.